A 527-amino-acid chain; its full sequence is Lysine--tRNA ligase (527 aa).

Residues glutamate 431 and glutamate 438 each contribute to the Mg(2+) site.

This sequence belongs to the class-II aminoacyl-tRNA synthetase family. Homodimer. Mg(2+) is required as a cofactor.

It localises to the cytoplasm. The catalysed reaction is tRNA(Lys) + L-lysine + ATP = L-lysyl-tRNA(Lys) + AMP + diphosphate. The polypeptide is Lysine--tRNA ligase (lysS) (Chlamydia pneumoniae (Chlamydophila pneumoniae)).